The sequence spans 178 residues: Probable chorismate pyruvate-lyase (178 aa).

Substrate is bound by residues Arg-67, Leu-105, and Glu-164.

The protein belongs to the UbiC family.

Its subcellular location is the cytoplasm. It catalyses the reaction chorismate = 4-hydroxybenzoate + pyruvate. The protein operates within cofactor biosynthesis; ubiquinone biosynthesis. Removes the pyruvyl group from chorismate, with concomitant aromatization of the ring, to provide 4-hydroxybenzoate (4HB) for the ubiquinone pathway. In Methylobacillus flagellatus (strain ATCC 51484 / DSM 6875 / VKM B-1610 / KT), this protein is Probable chorismate pyruvate-lyase.